A 314-amino-acid polypeptide reads, in one-letter code: DNA-directed RNA polymerase subunit alpha (314 aa).

Residues 1 to 227 (MTTFEIECIE…ELLFPLKEIN (227 aa)) are alpha N-terminal domain (alpha-NTD). The interval 237-314 (IEDSKINQIL…LPKEKTSKSN (78 aa)) is alpha C-terminal domain (alpha-CTD).

The protein belongs to the RNA polymerase alpha chain family. As to quaternary structure, in plastids the minimal PEP RNA polymerase catalytic core is composed of four subunits: alpha, beta, beta', and beta''. When a (nuclear-encoded) sigma factor is associated with the core the holoenzyme is formed, which can initiate transcription.

Its subcellular location is the plastid. It localises to the chloroplast. The enzyme catalyses RNA(n) + a ribonucleoside 5'-triphosphate = RNA(n+1) + diphosphate. Its function is as follows. DNA-dependent RNA polymerase catalyzes the transcription of DNA into RNA using the four ribonucleoside triphosphates as substrates. This Pyrenomonas salina protein is DNA-directed RNA polymerase subunit alpha.